A 979-amino-acid polypeptide reads, in one-letter code: Pro-apoptotic serine protease NMA111 (979 aa).

Basic and acidic residues predominate over residues 1–20 (MKRNGESHLNGEAKKSRTEQ). A disordered region spans residues 1–43 (MKRNGESHLNGEAKKSRTEQNQEQQDYQDEYYSSSDEELLPSS). Residues 21–34 (NQEQQDYQDEYYSS) show a composition bias toward low complexity. The segment at 65–260 (KVVNSVVSIQ…LPVSRPKRAL (196 aa)) is serine protease. Active-site charge relay system residues include H108, D139, and S222. 2 PDZ domains span residues 277–362 (EWQL…FVFQ) and 871–943 (PHYG…VSFD).

It belongs to the peptidase S1C family.

The protein localises to the nucleus. Its function is as follows. Nuclear serine protease which mediates apoptosis. The polypeptide is Pro-apoptotic serine protease NMA111 (NMA111) (Lodderomyces elongisporus (strain ATCC 11503 / CBS 2605 / JCM 1781 / NBRC 1676 / NRRL YB-4239) (Yeast)).